A 102-amino-acid polypeptide reads, in one-letter code: Large ribosomal subunit protein bL21 (102 aa).

It belongs to the bacterial ribosomal protein bL21 family. In terms of assembly, part of the 50S ribosomal subunit. Contacts protein L20.

Its function is as follows. This protein binds to 23S rRNA in the presence of protein L20. The chain is Large ribosomal subunit protein bL21 from Bacillus licheniformis (strain ATCC 14580 / DSM 13 / JCM 2505 / CCUG 7422 / NBRC 12200 / NCIMB 9375 / NCTC 10341 / NRRL NRS-1264 / Gibson 46).